A 110-amino-acid polypeptide reads, in one-letter code: Lichenan-specific phosphotransferase enzyme IIA component (110 aa).

The region spanning 3–101 is the PTS EIIA type-3 domain; the sequence is EEMEQIIFQI…AAEIIELYEK (99 aa). Residue H77 is the Tele-phosphohistidine intermediate; by HPr of the active site.

The protein resides in the cytoplasm. The phosphoenolpyruvate-dependent sugar phosphotransferase system (PTS), a major carbohydrate active -transport system, catalyzes the phosphorylation of incoming sugar substrates concomitant with their translocation across the cell membrane. This system is involved in lichenan transport. The sequence is that of Lichenan-specific phosphotransferase enzyme IIA component (licA) from Bacillus subtilis (strain 168).